Reading from the N-terminus, the 247-residue chain is Phosphoribosylaminoimidazole-succinocarboxamide synthase (247 aa).

The protein belongs to the SAICAR synthetase family.

The catalysed reaction is 5-amino-1-(5-phospho-D-ribosyl)imidazole-4-carboxylate + L-aspartate + ATP = (2S)-2-[5-amino-1-(5-phospho-beta-D-ribosyl)imidazole-4-carboxamido]succinate + ADP + phosphate + 2 H(+). The protein operates within purine metabolism; IMP biosynthesis via de novo pathway; 5-amino-1-(5-phospho-D-ribosyl)imidazole-4-carboxamide from 5-amino-1-(5-phospho-D-ribosyl)imidazole-4-carboxylate: step 1/2. The protein is Phosphoribosylaminoimidazole-succinocarboxamide synthase of Herpetosiphon aurantiacus (strain ATCC 23779 / DSM 785 / 114-95).